A 585-amino-acid chain; its full sequence is Optineurin (585 aa).

Residues 1-32 (MSHQPLSCLTEKGDSSCETPGNGPSNMVHPNL) form a disordered region. Over residues 16–25 (SCETPGNGPS) the composition is skewed to polar residues. A coiled-coil region spans residues 38–181 (EELLQQMKEL…VSELQLKLNS (144 aa)). Residues 58-220 (MKLNNQAMKG…GPTRTDSISM (163 aa)) form an interaction with Rab8 region. The LIR signature appears at 187–192 (DSFVEI). 2 positions are modified to phosphoserine: Ser-188 and Ser-209. Disordered stretches follow at residues 200-220 (EGAMKEMRNSAGPTRTDSISM) and 269-299 (FEKKANGHSAIETQTEGSTQKEEEDKDPESV). The stretch at 244–512 (CLREGNQKVE…LLKENNDFED (269 aa)) forms a coiled coil. At Ser-346 the chain carries Phosphoserine. The interval 415–585 (TKQQAEKVDK…LQIHVMDCII (171 aa)) is interaction with HD. The interval 416–525 (KQQAEKVDKV…RQSLMEMQCR (110 aa)) is interaction with MYO6. The short motif at 478–483 (DFHAER) is the UBAN element. Residue Ser-531 is modified to Phosphoserine. The CCHC NOA-type zinc-finger motif lies at 555–585 (PRSIPIHSCPKCGEVLPDIDTLQIHVMDCII). The Zn(2+) site is built by Cys-563, Cys-566, His-579, and Cys-583.

Self-associates. Interacts with HD. Interacts with GTF3A. Interacts with MYO6. Interacts (via UBAN) with ubiquitinated TFRC. Interacts with GTP-bound Rab8 (RAB8A and/or RAB8B). Interacts with TBC1D17. Interacts with TBK1. Interacts with TRAF3. Binds to linear ubiquitin chains. Interacts with LC3 family members MAP1LC3A, MAP1LC3B, GABARAP, GABARAPL1 and GABARAPL2; OPTN phosphorylation increases the association (at least with MAP1LC3B). Interacts with RAB12; the interaction may be indirect. Interacts with TBK1; this interaction leads to the Golgi localization of TBK1 and its subsequent activation. Interacts with palmitoyltransferase ZDHHC17/HIP14; the interaction does not lead to palmitoylation of OPTN. Interacts with CYLD. Interacts with TOM1; the interaction is indirect and is mediated by MYO6, which acts as a bridge between TOM1 and OPTN. Interacts with USP12; the interaction is independent of USP12 deubiquitinase activity and may be involved in regulation of autophagic flux. In terms of processing, phosphorylated by TBK1, leading to restrict bacterial proliferation in case of infection.

The protein localises to the cytoplasm. It localises to the perinuclear region. Its subcellular location is the golgi apparatus. It is found in the trans-Golgi network. The protein resides in the cytoplasmic vesicle. The protein localises to the autophagosome. It localises to the recycling endosome. In terms of biological role, plays an important role in the maintenance of the Golgi complex, in membrane trafficking, in exocytosis, through its interaction with myosin VI and Rab8. Links myosin VI to the Golgi complex and plays an important role in Golgi ribbon formation. Negatively regulates the induction of IFNB in response to RNA virus infection. Plays a neuroprotective role in the eye and optic nerve. Probably part of the TNF-alpha signaling pathway that can shift the equilibrium toward induction of cell death. May act by regulating membrane trafficking and cellular morphogenesis via a complex that contains Rab8 and huntingtin (HD). Mediates the interaction of Rab8 with the probable GTPase-activating protein TBC1D17 during Rab8-mediated endocytic trafficking, such as that of transferrin receptor (TFRC/TfR); regulates Rab8 recruitment to tubules emanating from the endocytic recycling compartment. Autophagy receptor that interacts directly with both the cargo to become degraded and an autophagy modifier of the MAP1 LC3 family; targets ubiquitin-coated bacteria (xenophagy) and appears to function in the same pathway as SQSTM1 and CALCOCO2/NDP52. This is Optineurin (Optn) from Rattus norvegicus (Rat).